Reading from the N-terminus, the 507-residue chain is Cobyric acid synthase (507 aa).

The GATase cobBQ-type domain maps to 249–451 (DIEIAVINLP…IHGIFENREF (203 aa)). Cys330 serves as the catalytic Nucleophile. His443 is an active-site residue.

Belongs to the CobB/CobQ family. CobQ subfamily.

Its pathway is cofactor biosynthesis; adenosylcobalamin biosynthesis. Its function is as follows. Catalyzes amidations at positions B, D, E, and G on adenosylcobyrinic A,C-diamide. NH(2) groups are provided by glutamine, and one molecule of ATP is hydrogenolyzed for each amidation. The chain is Cobyric acid synthase from Thermoanaerobacter sp. (strain X514).